The sequence spans 362 residues: Epoxyqueuosine reductase (362 aa).

Catalysis depends on aspartate 143, which acts as the Proton donor. A 4Fe-4S ferredoxin-type domain is found at 191–220 (PDSPKHQDSCGKCQACIKLCPTGAIQPGKM). 8 residues coordinate [4Fe-4S] cluster: cysteine 200, cysteine 203, cysteine 206, cysteine 210, cysteine 226, cysteine 253, cysteine 256, and cysteine 260.

This sequence belongs to the QueG family. In terms of assembly, monomer. Cob(II)alamin serves as cofactor. Requires [4Fe-4S] cluster as cofactor.

It localises to the cytoplasm. It catalyses the reaction epoxyqueuosine(34) in tRNA + AH2 = queuosine(34) in tRNA + A + H2O. The protein operates within tRNA modification; tRNA-queuosine biosynthesis. In terms of biological role, catalyzes the conversion of epoxyqueuosine (oQ) to queuosine (Q), which is a hypermodified base found in the wobble positions of tRNA(Asp), tRNA(Asn), tRNA(His) and tRNA(Tyr). In Francisella cf. novicida (strain Fx1), this protein is Epoxyqueuosine reductase.